We begin with the raw amino-acid sequence, 39 residues long: Protein YkiC (39 aa).

Residues 13–35 traverse the membrane as a helical segment; sequence LLSAKLCNCTQAIMTHIIASFLA.

It is found in the cell inner membrane. In Escherichia coli (strain K12), this protein is Protein YkiC.